We begin with the raw amino-acid sequence, 546 residues long: Sodium/hydrogen exchanger 2 (546 aa).

The Cytoplasmic portion of the chain corresponds to Met1–Ser21. The chain crosses the membrane as a helical span at residues Val22–Leu42. The Vacuolar segment spans residues Glu43 to Trp47. A helical transmembrane segment spans residues Met48 to Ile68. Topologically, residues Ser69–His75 are cytoplasmic. The segment at residues Leu76–Ala96 is an intramembrane region (helical). The Cytoplasmic portion of the chain corresponds to Gly97 to Thr111. The chain crosses the membrane as a helical span at residues Ile112–Ile132. Over Gln133–Phe148 the chain is Vacuolar. 2 consecutive intramembrane regions (helical) follow at residues Leu149–Asn168 and Leu174–Phe194. Topologically, residues Asn195–Phe218 are vacuolar. A helical membrane pass occupies residues Tyr219–Ile239. Topologically, residues Lys240–Tyr264 are cytoplasmic. The chain crosses the membrane as a helical span at residues Met265 to Met285. At Ser286–Ala304 the chain is on the vacuolar side. N-linked (GlcNAc...) asparagine glycosylation is present at Asn292. Residues Phe305 to Leu325 form a helical membrane-spanning segment. The Cytoplasmic portion of the chain corresponds to Asp326 to Ser344. The chain crosses the membrane as a helical span at residues Ser345–Leu365. The Vacuolar segment spans residues Ser366–Gln381. Residues Gln382–Asn402 form a helical membrane-spanning segment. At Lys403–Asn415 the chain is on the cytoplasmic side. A helical transmembrane segment spans residues Ala416–Leu436. At Thr437–Pro546 the chain is on the vacuolar side.

This sequence belongs to the monovalent cation:proton antiporter 1 (CPA1) transporter (TC 2.A.36) family. In terms of tissue distribution, expressed in roots and shoots.

The protein localises to the vacuole membrane. The enzyme catalyses Na(+)(in) + H(+)(out) = Na(+)(out) + H(+)(in). The catalysed reaction is K(+)(in) + H(+)(out) = K(+)(out) + H(+)(in). Its function is as follows. Acts in low affinity electroneutral exchange of protons for cations such as Na(+) or K(+) across membranes. May also exchange Li(+) and Cs(+) with a lower affinity. Involved in vacuolar ion compartmentalization necessary for cell volume regulation and cytoplasmic Na(+) detoxification. This chain is Sodium/hydrogen exchanger 2 (NHX2), found in Arabidopsis thaliana (Mouse-ear cress).